The following is a 276-amino-acid chain: Formamidopyrimidine-DNA glycosylase (276 aa).

P2 acts as the Schiff-base intermediate with DNA in catalysis. The active-site Proton donor is E3. K60 (proton donor; for beta-elimination activity) is an active-site residue. 3 residues coordinate DNA: H93, R112, and R155. The FPG-type zinc finger occupies L240–K274. R264 serves as the catalytic Proton donor; for delta-elimination activity.

This sequence belongs to the FPG family. Monomer. Zn(2+) serves as cofactor.

It carries out the reaction Hydrolysis of DNA containing ring-opened 7-methylguanine residues, releasing 2,6-diamino-4-hydroxy-5-(N-methyl)formamidopyrimidine.. The catalysed reaction is 2'-deoxyribonucleotide-(2'-deoxyribose 5'-phosphate)-2'-deoxyribonucleotide-DNA = a 3'-end 2'-deoxyribonucleotide-(2,3-dehydro-2,3-deoxyribose 5'-phosphate)-DNA + a 5'-end 5'-phospho-2'-deoxyribonucleoside-DNA + H(+). Its function is as follows. Involved in base excision repair of DNA damaged by oxidation or by mutagenic agents. Acts as a DNA glycosylase that recognizes and removes damaged bases. Has a preference for oxidized purines, such as 7,8-dihydro-8-oxoguanine (8-oxoG). Has AP (apurinic/apyrimidinic) lyase activity and introduces nicks in the DNA strand. Cleaves the DNA backbone by beta-delta elimination to generate a single-strand break at the site of the removed base with both 3'- and 5'-phosphates. This is Formamidopyrimidine-DNA glycosylase from Brevibacillus brevis (strain 47 / JCM 6285 / NBRC 100599).